The following is a 487-amino-acid chain: Benzaldehyde dehydrogenase [NAD(+)] (487 aa).

Gly232–Gly237 is a binding site for NAD(+). Residues Glu254 and Cys288 contribute to the active site.

The protein belongs to the aldehyde dehydrogenase family. As to quaternary structure, homotetramer.

The enzyme catalyses benzaldehyde + NAD(+) + H2O = benzoate + NADH + 2 H(+). This is Benzaldehyde dehydrogenase [NAD(+)] (xylC) from Pseudomonas putida (Arthrobacter siderocapsulatus).